We begin with the raw amino-acid sequence, 406 residues long: Nuclear hormone receptor family member nhr-133 (406 aa).

Positions 8–83 (SGPCEICEQP…VGMNSSKFQN (76 aa)) form a DNA-binding region, nuclear receptor. The NR C4-type zinc finger occupies 11–31 (CEICEQPAHGNHFGVLSCRAC). The NR C4-type; degenerate zinc-finger motif lies at 47–66 (DRVCRKGNCIGNDLYRCKIC). The NR LBD domain occupies 150-406 (YSWSPNHYPN…YSHPEMFEFS (257 aa)).

It belongs to the nuclear hormone receptor family.

Its subcellular location is the nucleus. Orphan nuclear receptor. In Caenorhabditis elegans, this protein is Nuclear hormone receptor family member nhr-133.